Here is an 801-residue protein sequence, read N- to C-terminus: Na(+)/H(+) antiporter subunit A (801 aa).

21 helical membrane passes run 4–21 (LHLA…IPFL), 28–50 (VHTG…PMIR), 80–102 (GLLF…IFYL), 109–128 (LGPF…GVVL), 132–154 (VMVL…GYWY), 166–188 (SLLI…YLIT), 203–222 (IAGH…GAFT), 229–251 (FYIW…HSAT), 266–288 (IFAF…MVWG), 301–323 (ILAF…SAAA), 338–360 (AAIF…VGII), 372–394 (LGGL…FSMA), 428–450 (VLFP…KLLF), 471–493 (VGML…FPNI), 526–548 (GVTT…YLSL), 594–616 (YLLY…KGGF), 626–647 (IGVY…TVFA), 654–671 (IIAL…FVIF), 676–698 (LALT…FYHL), 710–732 (FRMT…GIAS), and 772–789 (MFEI…YSMI).

The protein belongs to the CPA3 antiporters (TC 2.A.63) subunit A family. As to quaternary structure, forms a heterooligomeric complex that consists of seven subunits: MrpA, MrpB, MrpC, MrpD, MrpE, MrpF and MrpG.

The protein resides in the cell membrane. Functionally, mrp complex is a Na(+)/H(+) antiporter that is considered to be the major Na(+) excretion system in B.subtilis. Has a major role in Na(+) resistance and a minor role in Na(+)- and K(+)-dependent pH homeostasis as compared to TetB. MrpA may be the actual Na(+)/H(+) antiporter, although the six other Mrp proteins are all required for Na(+)/H(+) antiport activity and Na(+) resistance. MrpA is required for initiation of sporulation when external Na(+) concentration increases. Also transports Li(+) but not K(+), Ca(2+) or Mg(2+). The chain is Na(+)/H(+) antiporter subunit A (mrpA) from Bacillus subtilis (strain 168).